Here is a 147-residue protein sequence, read N- to C-terminus: Hemoglobin subunit epsilon (147 aa).

Residues histidine 3–histidine 147 enclose the Globin domain. 2 positions are modified to phosphoserine: serine 14 and serine 51. The heme b site is built by histidine 64 and histidine 93.

It belongs to the globin family. In terms of tissue distribution, red blood cells.

In terms of biological role, hemoglobin epsilon chain is an embryonic-type beta-type chain found in prenatal and neonatal marsupials. The sequence is that of Hemoglobin subunit epsilon (HBE1) from Notamacropus eugenii (Tammar wallaby).